Reading from the N-terminus, the 455-residue chain is Epoxide hydrolase 1 (455 aa).

Residues 1–21 traverse the membrane as a helical; Signal-anchor for type III membrane protein segment; that stretch reads MWLELVLASLLGFVIYWFVSR. The Cytoplasmic portion of the chain corresponds to 22–455; it reads DKEETLPLGD…RKFVSLAELQ (434 aa). The Nucleophile role is filled by Asp226. At Arg295 the chain carries Dimethylated arginine. Tyr374 serves as the catalytic Proton donor. His431 functions as the Proton acceptor in the catalytic mechanism. Lys439 carries the post-translational modification N6-acetyllysine.

Belongs to the peptidase S33 family.

It localises to the microsome membrane. Its subcellular location is the endoplasmic reticulum membrane. The enzyme catalyses cis-stilbene oxide + H2O = (1R,2R)-hydrobenzoin. It carries out the reaction 1-(4-methoxyphenyl)-N-methyl-N-[(3-methyloxetan-3-yl)methyl]methanamine + H2O = 2-{[(4-methoxybenzyl)(methyl)amino]methyl}-2-methylpropane-1,3-diol. It catalyses the reaction 8,9-epoxy-(5Z,11Z,14Z)-eicosatrienoate + H2O = 8,9-dihydroxy-(5Z,11Z,14Z)-eicosatrienoate. The catalysed reaction is 11,12-epoxy-(5Z,8Z,14Z)-eicosatrienoate + H2O = 11,12-dihydroxy-(5Z,8Z,14Z)-eicosatrienoate. The enzyme catalyses 2-(5Z,8Z,11Z,14Z-eicosatetraenoyl)-glycerol + H2O = glycerol + (5Z,8Z,11Z,14Z)-eicosatetraenoate + H(+). With respect to regulation, inhibited by 10-hydroxystearamide and methoxy-arachidonyl fluorophosphate. In terms of biological role, biotransformation enzyme that catalyzes the hydrolysis of arene and aliphatic epoxides to less reactive and more water soluble dihydrodiols by the trans addition of water. May play a role in the metabolism of endogenous lipids such as epoxide-containing fatty acids. Metabolizes the abundant endocannabinoid 2-arachidonoylglycerol (2-AG) to free arachidonic acid (AA) and glycerol. Binds 20(S)-hydroxycholesterol (20(S)-OHC). This Rattus norvegicus (Rat) protein is Epoxide hydrolase 1.